A 140-amino-acid polypeptide reads, in one-letter code: HTH-type transcriptional regulator AdhR (140 aa).

An HTH merR-type domain is found at 1–69 (MNIAQVAKQF…IEALIEYTTL (69 aa)). Residues 3–22 (IAQVAKQFGLTAATLRYYER) constitute a DNA-binding region (H-T-H motif). Residues 75 to 125 (RTVEARKNILADERQRLIEKRKEIDETIKRLDTKIKDYDGKLRENEAKLKS) adopt a coiled-coil conformation. The tract at residues 120–140 (EAKLKSRPKTESLHGSVEQRR) is disordered.

Its function is as follows. Transcriptional regulator involved in the response to aldehyde stress. Binds to the promoter region of the adhA-yraA operon, the yraC and its own promoter region; binding is unchanged in the presence of aldehydes. The chain is HTH-type transcriptional regulator AdhR (adhR) from Bacillus subtilis (strain 168).